The chain runs to 129 residues: MFPLRAVLEPCLKNVIIPIVGMVKDSISTTSKLLAESRPPLSSNFHFSYENLFSYSLLSHPVVIDTATATITRRTEQLLNRKIISSSKRFPASNIYVYQEAFTYHDTASDFIIADSYYITTPSSSGHAL.

This is an uncharacterized protein from Saccharomyces cerevisiae (strain ATCC 204508 / S288c) (Baker's yeast).